The primary structure comprises 332 residues: L-lactate dehydrogenase A chain (332 aa).

N-acetylalanine is present on Ala-2. Lys-5 is modified (N6-acetyllysine; alternate). Lys-5 carries the post-translational modification N6-succinyllysine; alternate. An N6-acetyllysine modification is found at Lys-14. Position 18 is a phosphothreonine (Thr-18). An NAD(+)-binding site is contributed by 29-57; it reads GAVGMACAISILMKDLADELALVDVIEDK. At Lys-57 the chain carries N6-acetyllysine; alternate. A Glycyl lysine isopeptide (Lys-Gly) (interchain with G-Cter in SUMO2); alternate cross-link involves residue Lys-57. The residue at position 81 (Lys-81) is an N6-acetyllysine. Arg-99 is a binding site for NAD(+). Arg-106 provides a ligand contact to substrate. Residue Lys-118 is modified to N6-acetyllysine; alternate. At Lys-118 the chain carries N6-succinyllysine; alternate. N6-acetyllysine is present on Lys-126. NAD(+) is bound at residue Asn-138. Substrate is bound by residues Asn-138 and Arg-169. His-193 functions as the Proton acceptor in the catalytic mechanism. 2 positions are modified to N6-acetyllysine: Lys-224 and Lys-232. Tyr-239 carries the phosphotyrosine modification. Lys-243 is modified (N6-acetyllysine). Position 248 (Thr-248) interacts with substrate. Thr-309 carries the post-translational modification Phosphothreonine. An N6-acetyllysine; alternate modification is found at Lys-318. Lys-318 is modified (N6-succinyllysine; alternate). Thr-322 is modified (phosphothreonine).

Belongs to the LDH/MDH superfamily. LDH family. As to quaternary structure, homotetramer. Interacts with PTEN upstream reading frame protein MP31. ISGylated.

It is found in the cytoplasm. It carries out the reaction (S)-lactate + NAD(+) = pyruvate + NADH + H(+). It participates in fermentation; pyruvate fermentation to lactate; (S)-lactate from pyruvate: step 1/1. Interconverts simultaneously and stereospecifically pyruvate and lactate with concomitant interconversion of NADH and NAD(+). This Macaca fascicularis (Crab-eating macaque) protein is L-lactate dehydrogenase A chain (LDHA).